A 670-amino-acid chain; its full sequence is Sodium/glucose cotransporter 2 (670 aa).

The Extracellular portion of the chain corresponds to 1 to 20; sequence MEGHVEEGSELGEQKVLIDN. Residues 21–42 form a helical membrane-spanning segment; it reads PADILVIAAYFLLVIGVGLWSM. At 43–61 the chain is on the cytoplasmic side; it reads FRTNRGTVGGYFLAGRSMV. A helical transmembrane segment spans residues 62-83; the sequence is WWPVGASLFASNIGSGHFVGLA. Residues Ala-71 and Ile-74 each contribute to the Na(+) site. Topologically, residues 84-91 are extracellular; sequence GTGAASGL. A helical transmembrane segment spans residues 92–112; that stretch reads AVAGFEWNALFVVLLLGWLFV. The Cytoplasmic segment spans residues 113 to 134; sequence PVYLTAGVITMPQYLRKRFGGR. A helical transmembrane segment spans residues 135–164; sequence RIRLYLSVLSLFLYIFTKISVDMFSGAVFI. Over 165 to 171 the chain is Extracellular; the sequence is QQALGWN. A run of 2 helical transmembrane segments spans residues 172–193 and 194–215; these read IYAS…GGLA and ALMY…ILTG. Residues 216–273 lie on the Extracellular side of the membrane; that stretch reads YAFHEVGGYSGLFDKYLGAVTSLTVSKDPAVGNISSTCYQPRPDSYHLLRDPVTGGLP. An N-linked (GlcNAc...) asparagine glycan is attached at Asn-248. Disulfide bonds link Cys-253-Cys-509, Cys-343-Cys-349, Cys-353-Cys-359, and Cys-515-Cys-520. Residues 274–293 form a helical membrane-spanning segment; sequence WPALLLGLTIVSGWHWCSDQ. At 294–307 the chain is on the cytoplasmic side; sequence VIVQRCLAGKNLTH. A helical transmembrane segment spans residues 308-329; the sequence is IKAGCILCGYLKLMPMFLMVMP. Over 330 to 373 the chain is Extracellular; that stretch reads GMISRILYPDEVACVVPEVCKRVCGTEVGCSNIAYPRLVVKLMP. A helical transmembrane segment spans residues 374-404; the sequence is NGLRGLMLAVMLAALMSSLASIFNSSSTLFT. The Na(+) site is built by Ala-387, Ser-390, and Ser-391. Over 405–422 the chain is Cytoplasmic; that stretch reads MDIYTRLRPRAGDRELLL. The helical transmembrane segment at 423-444 threads the bilayer; it reads VGRLWVVFIVAVSVAWLPVVQA. Topologically, residues 445–449 are extracellular; it reads AQGGQ. The helical transmembrane segment at 450–475 threads the bilayer; it reads LFDYIQSVSSYLAPPVSAVFVLALFV. At 476 to 480 the chain is on the cytoplasmic side; that stretch reads PRVNE. Residues 481 to 503 traverse the membrane as a helical segment; it reads KGAFWGLIGGLLMGLARLIPEFF. The Extracellular portion of the chain corresponds to 504 to 521; that stretch reads FGTGSCVRPSACPAIFCR. The helical transmembrane segment at 522 to 545 threads the bilayer; the sequence is VHYLYFAIILFFCSGFLTLAISRC. Topologically, residues 546–649 are cytoplasmic; it reads TAPIPQKHLH…DISEDPSWAR (104 aa). Residues 650-668 traverse the membrane as a helical segment; sequence VVNLNALLMMTVAVFLWGF. The Extracellular segment spans residues 669–670; that stretch reads YA.

It belongs to the sodium:solute symporter (SSF) (TC 2.A.21) family. In terms of assembly, forms a heterodimer (via TM13) with PDZK1IP1 (via N-terminal transmembrane helix); this interaction enhances SLC5A2 transporter activity. Glycosylated at a single site. Kidney, in proximal tubule S1 segments.

The protein localises to the apical cell membrane. The catalysed reaction is D-glucose(out) + Na(+)(out) = D-glucose(in) + Na(+)(in). Enhanced by the interaction with PDZK1IP1/MAP17. Functionally, electrogenic Na(+)-coupled sugar symporter that actively transports D-glucose at the plasma membrane, with a Na(+) to sugar coupling ratio of 1:1. Transporter activity is driven by a transmembrane Na(+) electrochemical gradient set by the Na(+)/K(+) pump. Unlike SLC5A1/SGLT1, requires the auxiliary protein PDZK1IP1/MAP17 for full transporter activity. Has a primary role in D-glucose reabsorption from glomerular filtrate across the brush border of the early proximal tubules of the kidney. The polypeptide is Sodium/glucose cotransporter 2 (Slc5a2) (Rattus norvegicus (Rat)).